The chain runs to 347 residues: Dihydroorotase (347 aa).

His14 and His16 together coordinate Zn(2+). Substrate is bound by residues 16–18 (HLR) and Asn42. The Zn(2+) site is built by Lys100, His137, and His175. Lys100 is modified (N6-carboxylysine). Residue His137 coordinates substrate. Residue Leu220 participates in substrate binding. Asp248 is a binding site for Zn(2+). The active site involves Asp248. Substrate is bound by residues His252 and Ala264.

This sequence belongs to the metallo-dependent hydrolases superfamily. DHOase family. Class II DHOase subfamily. Homodimer. Zn(2+) is required as a cofactor.

The catalysed reaction is (S)-dihydroorotate + H2O = N-carbamoyl-L-aspartate + H(+). The protein operates within pyrimidine metabolism; UMP biosynthesis via de novo pathway; (S)-dihydroorotate from bicarbonate: step 3/3. In terms of biological role, catalyzes the reversible cyclization of carbamoyl aspartate to dihydroorotate. The sequence is that of Dihydroorotase from Jannaschia sp. (strain CCS1).